Consider the following 420-residue polypeptide: Diaminopimelate decarboxylase (420 aa).

K54 bears the N6-(pyridoxal phosphate)lysine mark. Position 191 (H191) interacts with substrate. Residues G227 and 268-271 (EPGR) contribute to the pyridoxal 5'-phosphate site. R271, R307, and Y311 together coordinate substrate. The active-site Proton donor is the C342. 2 residues coordinate substrate: E343 and Y378. Y378 contacts pyridoxal 5'-phosphate.

It belongs to the Orn/Lys/Arg decarboxylase class-II family. LysA subfamily. Pyridoxal 5'-phosphate serves as cofactor.

It catalyses the reaction meso-2,6-diaminopimelate + H(+) = L-lysine + CO2. It functions in the pathway amino-acid biosynthesis; L-lysine biosynthesis via DAP pathway; L-lysine from DL-2,6-diaminopimelate: step 1/1. With respect to regulation, is activated by 2,3-dimercaptopropan-1-ol. In terms of biological role, specifically catalyzes the decarboxylation of meso-diaminopimelate (meso-DAP) to L-lysine. Is not active against the DD- or LL-isomers of diaminopimelate. This is Diaminopimelate decarboxylase from Escherichia coli (strain K12).